The sequence spans 506 residues: MKYSLIAALPALAAASPTFSTETIHKQSAPVLSSTSAKEVPNSYMVVFKKHVKDASKHHDWVQSVHSKNTQERMELRKRSSDLPVSNEVFAGLKHTYELSGLKGYSGHFDDETLEAIRNHPDVDYIERDSEVRILGGDEPETENNSPWGLARISHRDSLSFGTWNKYLYAADGGEGVDVYVIDTGTNVDHVDFEGRAKWGKTIPNGDADEDGNGHGTHCSGTVAGKKYGVAKKAHVYAVKVLRSNGSGTMSDVVKGVEFAAKSHSEAVSAAKNGKKKGFKGSTANMSLGGGKSTTLDMAVNAAVDAGLHFAVAAGNDNADSCNYSPAAAENAVTVGASTLLDERAYFSNYGKCNDIFAPGLNILSTWIGSKHATNTISGTSMASPHIAGLLAYMLSLQPAKDSAYAVADITPKKLKANLIAIGTVGALSDVPSNTANVLAWNGGGSSNYTDIIEKGGYTVKKAASKEEEKESEFRITIPSLSELEDDFEKAKESAGRKAHHVGGKL.

Positions 1-15 are cleaved as a signal peptide; that stretch reads MKYSLIAALPALAAA. Positions 16-135 are cleaved as a propeptide — removed in mature form; sequence SPTFSTETIH…IERDSEVRIL (120 aa). In terms of domain architecture, Inhibitor I9 spans 43 to 134; the sequence is SYMVVFKKHV…YIERDSEVRI (92 aa). The disordered stretch occupies residues 59–79; it reads HDWVQSVHSKNTQERMELRKR. Basic and acidic residues predominate over residues 69 to 79; the sequence is NTQERMELRKR. The Peptidase S8 domain maps to 147–453; it reads PWGLARISHR…GGSSNYTDII (307 aa). Catalysis depends on charge relay system residues D183 and H215. 2 N-linked (GlcNAc...) asparagine glycosylation sites follow: N245 and N285. S381 acts as the Charge relay system in catalysis. A glycan (N-linked (GlcNAc...) asparagine) is linked at N448. Residues 459 to 506 constitute a propeptide, removed in mature form; that stretch reads TVKKAASKEEEKESEFRITIPSLSELEDDFEKAKESAGRKAHHVGGKL.

Belongs to the peptidase S8 family.

Its function is as follows. Serine protease. In Cochliobolus lunatus (Filamentous fungus), this protein is Subtilisin-like serine protease Cur l 4.0101.